The chain runs to 58 residues: Curromycin resistance protein (58 aa).

Positions 1–37 (MSVVALGATSITPPHGPESQGRPFPARGPVRPSARAR) are disordered. Residues 25-37 (PARGPVRPSARAR) are compositionally biased toward low complexity.

The chain is Curromycin resistance protein (cre) from Streptomyces hygroscopicus.